The following is a 286-amino-acid chain: Probable endonuclease 4 (286 aa).

His-71, His-111, Glu-147, Asp-181, His-184, His-218, Asp-231, His-233, and Glu-263 together coordinate Zn(2+).

Belongs to the AP endonuclease 2 family. Zn(2+) is required as a cofactor.

The enzyme catalyses Endonucleolytic cleavage to 5'-phosphooligonucleotide end-products.. In terms of biological role, endonuclease IV plays a role in DNA repair. It cleaves phosphodiester bonds at apurinic or apyrimidinic (AP) sites, generating a 3'-hydroxyl group and a 5'-terminal sugar phosphate. The protein is Probable endonuclease 4 of Vibrio cholerae serotype O1 (strain ATCC 39541 / Classical Ogawa 395 / O395).